A 139-amino-acid chain; its full sequence is Ribulose bisphosphate carboxylase small subunit (139 aa).

The protein belongs to the RuBisCO small chain family. Heterohexadecamer of 8 large and 8 small subunits.

It is found in the plastid. The protein localises to the chloroplast. In terms of biological role, ruBisCO catalyzes two reactions: the carboxylation of D-ribulose 1,5-bisphosphate, the primary event in carbon dioxide fixation, as well as the oxidative fragmentation of the pentose substrate in the photorespiration process. Both reactions occur simultaneously and in competition at the same active site. Although the small subunit is not catalytic it is essential for maximal activity. In Trieres chinensis (Marine centric diatom), this protein is Ribulose bisphosphate carboxylase small subunit.